Here is an 873-residue protein sequence, read N- to C-terminus: Polyribonucleotide nucleotidyltransferase (873 aa).

Positions 521 and 527 each coordinate Mg(2+). Positions 587–646 (PRIITTTVPVDKIGEVIGPKGKMINQIQEDTGAEIAIEDDGTVYISSEGGEAAEKAKQII) constitute a KH domain. Positions 658–730 (GETYKGTVVK…DRGKISLAIP (73 aa)) constitute an S1 motif domain. Positions 727–873 (LAIPGFENQE…VRRDFDPFDD (147 aa)) are disordered. The span at 742–857 (RRSDDRPRRD…EYREGREVRH (116 aa)) shows a compositional bias: basic and acidic residues.

This sequence belongs to the polyribonucleotide nucleotidyltransferase family. The cofactor is Mg(2+).

It localises to the cytoplasm. The catalysed reaction is RNA(n+1) + phosphate = RNA(n) + a ribonucleoside 5'-diphosphate. Involved in mRNA degradation. Catalyzes the phosphorolysis of single-stranded polyribonucleotides processively in the 3'- to 5'-direction. The chain is Polyribonucleotide nucleotidyltransferase from Bifidobacterium animalis subsp. lactis (strain AD011).